A 292-amino-acid chain; its full sequence is 4-hydroxy-tetrahydrodipicolinate synthase (292 aa).

Threonine 45 is a binding site for pyruvate. Tyrosine 133 serves as the catalytic Proton donor/acceptor. Lysine 161 acts as the Schiff-base intermediate with substrate in catalysis. Isoleucine 203 serves as a coordination point for pyruvate.

Belongs to the DapA family. Homotetramer; dimer of dimers.

It is found in the cytoplasm. The enzyme catalyses L-aspartate 4-semialdehyde + pyruvate = (2S,4S)-4-hydroxy-2,3,4,5-tetrahydrodipicolinate + H2O + H(+). The protein operates within amino-acid biosynthesis; L-lysine biosynthesis via DAP pathway; (S)-tetrahydrodipicolinate from L-aspartate: step 3/4. Functionally, catalyzes the condensation of (S)-aspartate-beta-semialdehyde [(S)-ASA] and pyruvate to 4-hydroxy-tetrahydrodipicolinate (HTPA). The polypeptide is 4-hydroxy-tetrahydrodipicolinate synthase (Herminiimonas arsenicoxydans).